Here is a 372-residue protein sequence, read N- to C-terminus: MAKSKTKHRLCSQESSVSALLASCTLSGSNSSNSDGSFHYKDKLYRSASQALQAYIDDFDLGQIYPGASTGKINIDEDFTNMSQFCNYIYKPNNAFENLDHKKHSNFISCRRHTVNDIDSMSLTTDDLLRLPADGSFSYTYVGPSHRTSKKNKKCRGRLGSLDIEKNPHFQGPYTSMGKDNFVTPVIRSNINGKQCGDKIELLILKAKRNLEQCTEELPKSMKKDDSPCSLDKLEADRSWENIPVTFKSPVPVNSDDSPQQTSRAKSAKGVLEDFLNNDNQSCTLSGGKHHGPVEALKQMLFNLQAVQERFNQNKTTDPKEEIKQVSEDDFSKLQLKESMIPITRSLQKALHHLSRLRDLVDDTNGERSPKM.

The signal sequence occupies residues 1–31 (MAKSKTKHRLCSQESSVSALLASCTLSGSNS). At Ser161 the chain carries Phosphoserine. The segment at 248–268 (KSPVPVNSDDSPQQTSRAKSA) is disordered. The segment covering 255 to 265 (SDDSPQQTSRA) has biased composition (polar residues).

The protein resides in the secreted. Functionally, might play a role in cell proliferation. In Homo sapiens (Human), this protein is Lung adenoma susceptibility protein 2 (LAS2).